A 1026-amino-acid chain; its full sequence is Multidrug resistance protein MdtC (1026 aa).

The next 11 membrane-spanning stretches (helical) occupy residues 15–35, 333–353, 360–380, 387–407, 431–451, 463–483, 528–548, 853–873, 897–917, 953–973, and 984–1004; these read ILIA…LPVA, EVEE…FLFL, LIPA…MYLC, LSLM…IVVL, VGFT…PLLL, FAVT…TLTP, LVGV…IAIP, LILI…LYES, LFNA…IGIV, PIMM…LSGG, and ITIV…TPVV.

Belongs to the resistance-nodulation-cell division (RND) (TC 2.A.6) family. MdtC subfamily. In terms of assembly, part of a tripartite efflux system composed of MdtA, MdtB and MdtC. MdtC forms a heteromultimer with MdtB.

The protein resides in the cell inner membrane. This chain is Multidrug resistance protein MdtC, found in Salmonella paratyphi C (strain RKS4594).